We begin with the raw amino-acid sequence, 276 residues long: Phosphate import ATP-binding protein PstB (276 aa).

In terms of domain architecture, ABC transporter spans 23–271 (VNNKNIVYDT…PSDQRTEDYI (249 aa)). 62–69 (GPSGCGKS) is a binding site for ATP.

This sequence belongs to the ABC transporter superfamily. Phosphate importer (TC 3.A.1.7) family. As to quaternary structure, the complex is composed of two ATP-binding proteins (PstB), two transmembrane proteins (PstC and PstA) and a solute-binding protein (PstS).

It localises to the cell membrane. The catalysed reaction is phosphate(out) + ATP + H2O = ADP + 2 phosphate(in) + H(+). In terms of biological role, part of the ABC transporter complex PstSACB involved in phosphate import. Responsible for energy coupling to the transport system. The protein is Phosphate import ATP-binding protein PstB of Oceanobacillus iheyensis (strain DSM 14371 / CIP 107618 / JCM 11309 / KCTC 3954 / HTE831).